A 409-amino-acid polypeptide reads, in one-letter code: Spermatogenesis-associated protein 2-like protein (409 aa).

Disordered stretches follow at residues 233 to 257 (EDEGSDEASLYGGPSPGPDSPTSEL), 270 to 299 (LWGAGGGPWEPAEVSSPTSGASEEEEPQPE), and 313 to 337 (RPGDLAPPHAPRSPEQASPPPIPEP).

It belongs to the SPATA2 family.

The sequence is that of Spermatogenesis-associated protein 2-like protein (SPATA2L) from Bos taurus (Bovine).